Here is a 370-residue protein sequence, read N- to C-terminus: Ubiquitin carboxyl-terminal hydrolase 12 (370 aa).

A Required for plasma membrane localization of USP12/WDR20 motif is present at residues 1–4; sequence MEIL. Residues 39-369 form the USP domain; it reads FGLVNFGNTC…SGYILFYQSR (331 aa). Catalysis depends on Cys48, which acts as the Nucleophile. Positions 146–157 are enriched in basic and acidic residues; it reads QEKQNGRLRNGD. Residues 146-168 form a disordered region; the sequence is QEKQNGRLRNGDVDNEDNNSTPD. Zn(2+) is bound by residues Cys186, Cys189, Cys233, and Cys236. His317 (proton acceptor) is an active-site residue.

It belongs to the peptidase C19 family. USP12/USP46 subfamily. As to quaternary structure, interacts with WDR48. Interacts with WDR20; this interaction promotes translocation of the USP12 complex to the plasma membrane. Component of the USP12/WDR20/WDR48 deubiquitinating complex. Component of the USP12/DMWD/WDR48 deubiquitinating complex. Interacts with PHLPP1. Interacts with RBPJ. Interacts with CBP; this interaction blocks the acetyltransferase activity of CREBBP.

It localises to the nucleus. The protein resides in the cytoplasm. It is found in the cell membrane. The enzyme catalyses Thiol-dependent hydrolysis of ester, thioester, amide, peptide and isopeptide bonds formed by the C-terminal Gly of ubiquitin (a 76-residue protein attached to proteins as an intracellular targeting signal).. Activated by interaction with WDR20; WDR48 and DMWD through different allosteric mechanisms. Deubiquitinating enzyme that plays various roles in the regulation of the immune response and inflammation. During TCR engagement and activation, translocates into the cytoplasm and deubiquitinates its substrates LAT and TRAT1 and prevents their lysosome-dependent degradation to stabilize the TCR signaling complex at the plasma membrane. Plays an essential role in the selective LPS-induced macrophage response through the activation of NF-kappa-B pathway. In addition, promotes that antiviral immune response through targeting DNA sensor IFI16 to inhibit its proteasome-dependent degradation. Participates in the interferon signaling pathway and antiviral response independently of its deubiquitinase activity by maintaining nuclear phosphorylated STAT1 levels via inhibition of its CREBBP-mediated acetylation and subsequent dephosphorylation. Plays an intrinsic role in promoting the differentiation, activation and proliferation of CD4(+) T-cell by activating the NF-kappa-B signaling pathway through deubiquitinating and stabilizing B-cell lymphoma/leukemia 10/BCL10. In myeloid-derived suppressor cells promotes the activation of the NF-kappa-B via deubiquitination and stabilization of RELA. Regulates the 'Lys-63'-linked polyubiquitin chains of BAX and thereby modulates the mitochondrial apoptotic process. Negative regulator of NOTCH signaling that specifically deubiquitinates non-activated NOTCH receptors to target them for lysosomal degradation; deubiquitination of NOTCH stimulates its transport form late endosomes to lysosomes. Protects neurons against HTT/huntingtin-induced polyglutamine expansion-dependent neurodegeneration through regulation of autophagic flux. This function is independent of deubiquitinase activity or of other components of the USP12-WDR20-WDR48 deubiquitinating complex. In complex with WDR48, acts as a potential tumor suppressor by positively regulating PHLPP1 stability. This Mus musculus (Mouse) protein is Ubiquitin carboxyl-terminal hydrolase 12 (Usp12).